A 484-amino-acid chain; its full sequence is Transcription factor MYB88 (484 aa).

Residues 1-20 form a disordered region; the sequence is MEETTKQNNMKKKKKILLHS. Residues 13–20 carry the Nuclear localization signal motif; the sequence is KKKILLHS. 2 HTH myb-type domains span residues 25–76 and 77–131; these read KKER…YTYL and NSDF…KKRA. DNA-binding regions (H-T-H motif) lie at residues 53-76 and 104-127; these read WAIIASKFNDKSTRQCRRRWYTYL and WTEIAKVVSGRTDNAVKNRFTTLC. 3 disordered regions span residues 215–241, 321–383, and 458–484; these read NATSSDGTEEQKQIGNVKESDGEDKSN, RSSN…GGEL, and GVESPSPYPSANPSQPPPCKRVLLDSL. Residues 232–241 show a composition bias toward basic and acidic residues; that stretch reads KESDGEDKSN. Over residues 339 to 348 the composition is skewed to low complexity; the sequence is SPASSEYSSG. Residues 354-380 are compositionally biased toward polar residues; the sequence is TIMTHPSGDKTQQLMSDTQTTSHQQNG. Pro residues predominate over residues 463 to 476; the sequence is SPYPSANPSQPPPC.

Interacts with RBR1. In terms of tissue distribution, expressed at low levels in all organs including roots, leaves, hypocotyls stems, flowers, siliques and buds.

The protein localises to the nucleus. In terms of biological role, transcription factor that binds to DNA in promoters cis-regulatory element 5'-GGCGCGC-3' of cell cycle genes, including cyclins, cyclin-dependent kinases (CDKs), and components of the pre-replication complex. Binds to DNA in promoters cis-regulatory element 5'-AGCCG-3' of auxin regulated genes (e.g. PIN3 and PIN7). Together with FAMA and MYB124, ensures that stomata contain just two guard cells (GCs) by enforcing a single symmetric precursor cell division before stomatal maturity. Represses the expression of the mitosis-inducing factors CDKB1-1 and CDKA-1, specifically required for the last guard mother cells (GMC) symmetric divisions in the stomatal pathway. Represses CYCA2-3 in newly formed guard cells. Together with MYB88, regulates stomata spacing by restricting divisions late in the stomatal cell lineage thus limiting the number of GMC divisions. In collaboration with CDKB1-1 and CDKB1-2, restrict the G1/S transition and chloroplast and nuclear number during stomatal formation, and normally maintain fate and developmental progression throughout the stomatal cell lineage. Involved in sensing and/or transducing abiotic stress (e.g. drought and salt), probably via the positive regulation of NAC019. Regulates female reproduction being required for entry into megasporogenesis, probably via the regulation of cell cycle genes. Plays a minor role in lateral roots (LRs) initiation. Involved complementarily in establishing the gravitropic set-point angles of lateral roots by regulating the transcription of PIN3 and PIN7 in gravity-sensing cells of primary and lateral roots. In Arabidopsis thaliana (Mouse-ear cress), this protein is Transcription factor MYB88.